Here is a 239-residue protein sequence, read N- to C-terminus: LexA repressor (239 aa).

Residues 26-46 (FDEMKDALDLASKSGIHRLIT) constitute a DNA-binding region (H-T-H motif). The interval 84–107 (SPSVIEGSLGKPQPVATPAPAKSV) is disordered. Active-site for autocatalytic cleavage activity residues include Ser-159 and Lys-197.

Belongs to the peptidase S24 family. Homodimer.

It catalyses the reaction Hydrolysis of Ala-|-Gly bond in repressor LexA.. Functionally, represses a number of genes involved in the response to DNA damage (SOS response), including recA and lexA. In the presence of single-stranded DNA, RecA interacts with LexA causing an autocatalytic cleavage which disrupts the DNA-binding part of LexA, leading to derepression of the SOS regulon and eventually DNA repair. The protein is LexA repressor of Rhizobium johnstonii (strain DSM 114642 / LMG 32736 / 3841) (Rhizobium leguminosarum bv. viciae).